The sequence spans 600 residues: MRVTTSFPLGTLRDTPSEAEIISHQLLLQAGYIRRVNSGIYAYMPIMLRVIEKISAIIERELNSIGCTKLLLPQLHPADLWRKSERWEGYTAGEGIMFNLKDRQGKEFGLAPTHEEVITSIASETINSYKQLPQCFYQIQTKFRDEIRPRFGLMRSREFIMKDGYSFHSSEKDLASFYEKVGNAYENIFKSCGLETVGVEADSGAIGGASSKEFMVTADAGEDSILFTKSGSYAANIEKAVSLPSQPIPIKDNIAEWLETPHQKTILEVCDNNNLDPSQIIKVVIFLAQFEGEFEVPILACIRGDQHINEVKLFNLINKLHNFNLINLQKIEDKNTIEKNLVDFPLGFIGPDLDNKTIKASSNWVKKWTRIIDPSASELSKFISGGNKVNFHKLFQEFSFASKDYLIGDIRNAKKGDKISIANDEELKEKKGIEIGHIFQLGQKYSEKLNAKFSDKDGTLKNLWMGCYGIGVTRIAQAAIEQNHDQKGICWPIQISPFEVIIIPTNLKDPIQSELTEQIYNNFLINKIDVLLDDRNDRAGVKFKDAELIGIPFQIIIGRDSVNKEVELLSRTNNTKFKISTDKLLETFISESEIMYNKNS.

This sequence belongs to the class-II aminoacyl-tRNA synthetase family. ProS type 1 subfamily. Homodimer.

The protein localises to the cytoplasm. It carries out the reaction tRNA(Pro) + L-proline + ATP = L-prolyl-tRNA(Pro) + AMP + diphosphate. Catalyzes the attachment of proline to tRNA(Pro) in a two-step reaction: proline is first activated by ATP to form Pro-AMP and then transferred to the acceptor end of tRNA(Pro). As ProRS can inadvertently accommodate and process non-cognate amino acids such as alanine and cysteine, to avoid such errors it has two additional distinct editing activities against alanine. One activity is designated as 'pretransfer' editing and involves the tRNA(Pro)-independent hydrolysis of activated Ala-AMP. The other activity is designated 'posttransfer' editing and involves deacylation of mischarged Ala-tRNA(Pro). The misacylated Cys-tRNA(Pro) is not edited by ProRS. The polypeptide is Proline--tRNA ligase (Prochlorococcus marinus (strain MIT 9215)).